Reading from the N-terminus, the 555-residue chain is Oxamate carbamoyltransferase subunit AllF (555 aa).

This sequence belongs to the AllF family. The OXTCase is composed of 3 subunits, AllF, AllG and AllH. It depends on Mg(2+) as a cofactor.

It catalyses the reaction oxamate + carbamoyl phosphate = N-carbamoyl-2-oxoglycine + phosphate. It participates in nitrogen metabolism; (S)-allantoin degradation. In terms of biological role, component of a carbamoyltransferase involved in the anaerobic nitrogen utilization via the assimilation of allantoin. Catalyzes the conversion of oxalurate (N-carbamoyl-2-oxoglycine) to oxamate and carbamoyl phosphate. The protein is Oxamate carbamoyltransferase subunit AllF of Escherichia coli (strain K12).